Here is a 229-residue protein sequence, read N- to C-terminus: NAD-dependent protein deacetylase (229 aa).

The 229-residue stretch at methionine 1–isoleucine 229 folds into the Deacetylase sirtuin-type domain. NAD(+) contacts are provided by alanine 20, arginine 32, glutamine 96, isoleucine 98, aspartate 99, histidine 114, threonine 181, serine 182, asparagine 205, and valine 223. Positions 98 and 99 each coordinate nicotinamide. Histidine 114 serves as the catalytic Proton acceptor.

This sequence belongs to the sirtuin family. Class U subfamily.

It is found in the cytoplasm. It catalyses the reaction N(6)-acetyl-L-lysyl-[protein] + NAD(+) + H2O = 2''-O-acetyl-ADP-D-ribose + nicotinamide + L-lysyl-[protein]. Functionally, NAD-dependent protein deacetylase which modulates the activities of several enzymes which are inactive in their acetylated form. This is NAD-dependent protein deacetylase from Listeria monocytogenes serotype 4b (strain F2365).